The following is a 273-amino-acid chain: Formamidopyrimidine-DNA glycosylase (273 aa).

The active-site Schiff-base intermediate with DNA is the Pro-2. Glu-3 acts as the Proton donor in catalysis. Residue Lys-58 is the Proton donor; for beta-elimination activity of the active site. The DNA site is built by His-91, Arg-110, and Arg-153. Residues 238–272 (KVYGKEGQPCPRCGEDFVKIKICGRGTTYCLHCQK) form an FPG-type zinc finger. Catalysis depends on Arg-262, which acts as the Proton donor; for delta-elimination activity.

The protein belongs to the FPG family. As to quaternary structure, monomer. Zn(2+) serves as cofactor.

The enzyme catalyses Hydrolysis of DNA containing ring-opened 7-methylguanine residues, releasing 2,6-diamino-4-hydroxy-5-(N-methyl)formamidopyrimidine.. It catalyses the reaction 2'-deoxyribonucleotide-(2'-deoxyribose 5'-phosphate)-2'-deoxyribonucleotide-DNA = a 3'-end 2'-deoxyribonucleotide-(2,3-dehydro-2,3-deoxyribose 5'-phosphate)-DNA + a 5'-end 5'-phospho-2'-deoxyribonucleoside-DNA + H(+). Involved in base excision repair of DNA damaged by oxidation or by mutagenic agents. Acts as a DNA glycosylase that recognizes and removes damaged bases. Has a preference for oxidized purines, such as 7,8-dihydro-8-oxoguanine (8-oxoG). Has AP (apurinic/apyrimidinic) lyase activity and introduces nicks in the DNA strand. Cleaves the DNA backbone by beta-delta elimination to generate a single-strand break at the site of the removed base with both 3'- and 5'-phosphates. This Lactobacillus delbrueckii subsp. bulgaricus (strain ATCC BAA-365 / Lb-18) protein is Formamidopyrimidine-DNA glycosylase.